The primary structure comprises 290 residues: Lectin-related protein (290 aa).

The signal sequence occupies residues 1 to 36 (ANSNSRPHLLQTQKPFSVVLAISITFYLLLLNKVNS). N-linked (GlcNAc...) asparagine glycosylation is found at N119, N147, and N152. Residues E161 and D163 each contribute to the Mn(2+) site. Positions 163, 167, and 170 each coordinate Ca(2+). Residues D170 and H175 each contribute to the Mn(2+) site.

Belongs to the leguminous lectin family. As to quaternary structure, homotetramer.

Functionally, does not have any carbohydrate binding or agglutination activity. In Cladrastis kentukea (Yellow wood), this protein is Lectin-related protein.